The sequence spans 498 residues: uncharacterized protein (498 aa).

This is an uncharacterized protein from Acanthamoeba polyphaga (Amoeba).